We begin with the raw amino-acid sequence, 320 residues long: Acetyl-coenzyme A carboxylase carboxyl transferase subunit alpha (320 aa).

Residues 33–294 enclose the CoA carboxyltransferase C-terminal domain; sequence AFDGEIESLR…GDAVEEELKA (262 aa).

Belongs to the AccA family. Acetyl-CoA carboxylase is a heterohexamer composed of biotin carboxyl carrier protein (AccB), biotin carboxylase (AccC) and two subunits each of ACCase subunit alpha (AccA) and ACCase subunit beta (AccD).

Its subcellular location is the cytoplasm. The enzyme catalyses N(6)-carboxybiotinyl-L-lysyl-[protein] + acetyl-CoA = N(6)-biotinyl-L-lysyl-[protein] + malonyl-CoA. Its pathway is lipid metabolism; malonyl-CoA biosynthesis; malonyl-CoA from acetyl-CoA: step 1/1. Functionally, component of the acetyl coenzyme A carboxylase (ACC) complex. First, biotin carboxylase catalyzes the carboxylation of biotin on its carrier protein (BCCP) and then the CO(2) group is transferred by the carboxyltransferase to acetyl-CoA to form malonyl-CoA. This chain is Acetyl-coenzyme A carboxylase carboxyl transferase subunit alpha, found in Phenylobacterium zucineum (strain HLK1).